Here is a 396-residue protein sequence, read N- to C-terminus: Deoxyguanosinetriphosphate triphosphohydrolase-like protein (396 aa).

One can recognise an HD domain in the interval 62 to 198; sequence RLTHSLEVAQ…AALADDIAYN (137 aa).

Belongs to the dGTPase family. Type 2 subfamily.

The polypeptide is Deoxyguanosinetriphosphate triphosphohydrolase-like protein (Jannaschia sp. (strain CCS1)).